Reading from the N-terminus, the 294-residue chain is Energy-coupling factor transporter ATP-binding protein EcfA1 (294 aa).

The ABC transporter domain maps to 27–260; that stretch reads IEFENVYFAY…EERLLKMQLD (234 aa). 60-67 provides a ligand contact to ATP; the sequence is GHNGSGKS.

This sequence belongs to the ABC transporter superfamily. Energy-coupling factor EcfA family. As to quaternary structure, forms a stable energy-coupling factor (ECF) transporter complex composed of 2 membrane-embedded substrate-binding proteins (S component), 2 ATP-binding proteins (A component) and 2 transmembrane proteins (T component).

It is found in the cell membrane. In terms of biological role, ATP-binding (A) component of a common energy-coupling factor (ECF) ABC-transporter complex. Unlike classic ABC transporters this ECF transporter provides the energy necessary to transport a number of different substrates. The chain is Energy-coupling factor transporter ATP-binding protein EcfA1 from Ureaplasma parvum serovar 3 (strain ATCC 700970).